The primary structure comprises 760 residues: ATP-dependent zinc metalloprotease FtsH (760 aa).

Residues 1 to 5 are Cytoplasmic-facing; the sequence is MNRKN. A helical membrane pass occupies residues 6–26; it reads VTRTITAIAVVVLLGWSFFYF. Over 27-110 the chain is Extracellular; that stretch reads SDDTRGYKPV…KVSTVVNQGS (84 aa). A helical transmembrane segment spans residues 111-131; it reads ILGELLVYVLPLLLLVGLFVM. Over 132–760 the chain is Cytoplasmic; it reads FSRMQGGARM…EVSRTKPAHG (629 aa). Residue 203 to 210 coordinates ATP; it reads GPPGTGKT. His-425 provides a ligand contact to Zn(2+). Residue Glu-426 is part of the active site. Zn(2+) is bound by residues His-429 and Asp-501. The tract at residues 616–760 is disordered; that stretch reads DFGGRIPSDK…EVSRTKPAHG (145 aa). Residues 650–669 show a composition bias toward low complexity; the sequence is AFKAAIAQATQAAEAARSDA. Over residues 740–750 the composition is skewed to acidic residues; it reads GSDESSAEQDD.

It in the central section; belongs to the AAA ATPase family. The protein in the C-terminal section; belongs to the peptidase M41 family. Homohexamer. Zn(2+) is required as a cofactor.

The protein resides in the cell membrane. Its function is as follows. Acts as a processive, ATP-dependent zinc metallopeptidase for both cytoplasmic and membrane proteins. Plays a role in the quality control of integral membrane proteins. The chain is ATP-dependent zinc metalloprotease FtsH from Mycobacterium bovis (strain ATCC BAA-935 / AF2122/97).